The following is a 321-amino-acid chain: Probable arabinan endo-1,5-alpha-L-arabinosidase A (321 aa).

The signal sequence occupies residues 1-19 (MYRLLSVASVPLLASLVHG). The active-site Proton acceptor is D34. Residue E200 is the Proton donor of the active site. N295 carries an N-linked (GlcNAc...) asparagine glycan.

Belongs to the glycosyl hydrolase 43 family.

The protein localises to the secreted. It carries out the reaction Endohydrolysis of (1-&gt;5)-alpha-arabinofuranosidic linkages in (1-&gt;5)-arabinans.. It functions in the pathway glycan metabolism; L-arabinan degradation. Its function is as follows. Endo-1,5-alpha-L-arabinanase involved in degradation of pectin. Its preferred substrate is linear 1,5-alpha-L-arabinan. The sequence is that of Probable arabinan endo-1,5-alpha-L-arabinosidase A (abnA) from Aspergillus niger (strain ATCC MYA-4892 / CBS 513.88 / FGSC A1513).